The following is an 83-amino-acid chain: Erabutoxin b (83 aa).

The signal sequence occupies residues methionine 1–threonine 21. The interval cysteine 24–cysteine 38 is loop I. Cystine bridges form between cysteine 24–cysteine 45, cysteine 38–cysteine 62, cysteine 64–cysteine 75, and cysteine 76–cysteine 81. The tract at residues serine 39–serine 44 is stretch between loop I and loop II. The tract at residues cysteine 45–cysteine 62 is loop II. Residues cysteine 64 to cysteine 75 form a loop III region.

It belongs to the three-finger toxin family. Short-chain subfamily. Type I alpha-neurotoxin sub-subfamily. Expressed by the venom gland.

The protein resides in the secreted. Functionally, binds with high affinity to muscular nicotinic acetylcholine receptors (nAChRs) (tested on Torpedo marmorata, Kd=0.07 nM), and with low affinity to neuronal alpha-7/CHRNA7 nAChRs (tested on chimeric alpha-7/CHRNA7, Kd=22 uM) and inhibit acetylcholine from binding to the receptor, thereby impairing neuromuscular transmission. Produces peripheral paralysis by blocking neuromuscular transmission at the postsynaptic site. The protein is Erabutoxin b of Laticauda semifasciata (Black-banded sea krait).